Reading from the N-terminus, the 380-residue chain is Probable peptidoglycan glycosyltransferase FtsW (380 aa).

Helical transmembrane passes span 14 to 34, 52 to 72, 79 to 99, 112 to 131, 141 to 161, 162 to 182, 188 to 208, 268 to 288, 304 to 324, and 341 to 361; these read LLWC…SSSI, ILYL…PISF, IILL…NSIH, MQPS…NYLS, FGGF…LLVE, PDLG…FISG, FIPT…KSPY, IIGE…IFFI, IFFS…QTLI, and PLIS…IILI.

Belongs to the SEDS family. FtsW subfamily.

It is found in the cell membrane. The enzyme catalyses [GlcNAc-(1-&gt;4)-Mur2Ac(oyl-L-Ala-gamma-D-Glu-L-Lys-D-Ala-D-Ala)](n)-di-trans,octa-cis-undecaprenyl diphosphate + beta-D-GlcNAc-(1-&gt;4)-Mur2Ac(oyl-L-Ala-gamma-D-Glu-L-Lys-D-Ala-D-Ala)-di-trans,octa-cis-undecaprenyl diphosphate = [GlcNAc-(1-&gt;4)-Mur2Ac(oyl-L-Ala-gamma-D-Glu-L-Lys-D-Ala-D-Ala)](n+1)-di-trans,octa-cis-undecaprenyl diphosphate + di-trans,octa-cis-undecaprenyl diphosphate + H(+). Its pathway is cell wall biogenesis; peptidoglycan biosynthesis. Its function is as follows. Peptidoglycan polymerase that is essential for cell division. In Buchnera aphidicola subsp. Baizongia pistaciae (strain Bp), this protein is Probable peptidoglycan glycosyltransferase FtsW.